The primary structure comprises 554 residues: Glucose-6-phosphate isomerase (554 aa).

Glu359 serves as the catalytic Proton donor. Residues His390 and Lys518 contribute to the active site.

It belongs to the GPI family.

The protein resides in the cytoplasm. It catalyses the reaction alpha-D-glucose 6-phosphate = beta-D-fructose 6-phosphate. It participates in carbohydrate biosynthesis; gluconeogenesis. The protein operates within carbohydrate degradation; glycolysis; D-glyceraldehyde 3-phosphate and glycerone phosphate from D-glucose: step 2/4. Catalyzes the reversible isomerization of glucose-6-phosphate to fructose-6-phosphate. The chain is Glucose-6-phosphate isomerase from Pseudomonas syringae pv. tomato (strain ATCC BAA-871 / DC3000).